A 370-amino-acid polypeptide reads, in one-letter code: Molybdenum import ATP-binding protein ModC (370 aa).

Residues 2–233 form the ABC transporter domain; the sequence is SVRVDIGHRL…LDLLPAEERG (232 aa). 31-38 serves as a coordination point for ATP; the sequence is GPSGSGKT. The Mop domain occupies 293–359; sequence GLSALNILPG…VKTVSFDRAN (67 aa).

This sequence belongs to the ABC transporter superfamily. Molybdate importer (TC 3.A.1.8) family. As to quaternary structure, the complex is composed of two ATP-binding proteins (ModC), two transmembrane proteins (ModB) and a solute-binding protein (ModA).

It localises to the cell inner membrane. The catalysed reaction is molybdate(out) + ATP + H2O = molybdate(in) + ADP + phosphate + H(+). Its function is as follows. Part of the ABC transporter complex ModABC involved in molybdenum import. Responsible for energy coupling to the transport system. The sequence is that of Molybdenum import ATP-binding protein ModC from Mesorhizobium japonicum (strain LMG 29417 / CECT 9101 / MAFF 303099) (Mesorhizobium loti (strain MAFF 303099)).